The chain runs to 450 residues: Crinkler effector protein 63 (450 aa).

A signal peptide spans 1-17; that stretch reads MVKLFCAIVGAAGSAFP. Residues 18–55 are LQLFLAK domain; it reads VDIDAGQSAGDLKDAIKAKNPATITCDAKDLQLSLAKT. The DWL domain stretch occupies residues 58–117; that stretch reads GAWLPDDDQAALDLEDGKVHEDIQALIDGEKMKATWTIEDVLTANNMTKRKGRAPKSRQI. The N-linked (GlcNAc...) asparagine glycan is linked to Asn103. An HVLVXXP motif motif is present at residues 118-124; sequence HVLVVVP. The effector domain stretch occupies residues 125–450; sequence EGAFGSASET…RSIPTFSYFS (326 aa). The Nuclear localization signal (NLS) motif lies at 218–224; sequence QRKRYRR. Asn342 carries an N-linked (GlcNAc...) asparagine glycan.

It belongs to the Crinkler effector family. In terms of assembly, forms a homodimer via an inverted association manner. Forms heterodimers with CRN79 and CRN115.

The protein resides in the secreted. Its subcellular location is the host nucleus. The protein localises to the host nucleoplasm. Secreted effector that, with CRN115, is critical to pathogenesis by modulating host defenses. Induces cell death in plant host cells. Suppresses callose deposition and affects expression of defense-related genes including two salicylic acid (SA) signal-induced and antimicrobial PR genes (PR1 and PR2), and genes involved in jasmonic acid (JA)/ethylene (ET)-mediated defense pathway (ERF1, ORA59, PDF1.2). CRN115 and CRN63 may share the same molecular host targets that are involved in the cell death signal transduction pathway and that their differential activities are dependent on plant nuclear localization or not. Does not affect MAPK activation and BIK1 phosphorylation and acts downstream of the MAPK cascades in PTI signaling. The chain is Crinkler effector protein 63 from Phytophthora sojae (strain P6497) (Soybean stem and root rot agent).